Reading from the N-terminus, the 428-residue chain is Dihydroorotase (428 aa).

The Zn(2+) site is built by His-59 and His-61. Residues 61–63 (HLR) and Asn-93 each bind substrate. Residues Asp-151, His-178, and His-231 each contribute to the Zn(2+) site. Position 277 (Asn-277) interacts with substrate. Residue Asp-304 coordinates Zn(2+). The active site involves Asp-304. Substrate is bound by residues His-308 and 322–323 (FG).

Belongs to the metallo-dependent hydrolases superfamily. DHOase family. Class I DHOase subfamily. The cofactor is Zn(2+).

The catalysed reaction is (S)-dihydroorotate + H2O = N-carbamoyl-L-aspartate + H(+). Its pathway is pyrimidine metabolism; UMP biosynthesis via de novo pathway; (S)-dihydroorotate from bicarbonate: step 3/3. In terms of biological role, catalyzes the reversible cyclization of carbamoyl aspartate to dihydroorotate. This is Dihydroorotase from Bacillus cereus (strain AH187).